The chain runs to 340 residues: Transcription initiation factor IIB (340 aa).

Residues 16-49 form a TFIIB-type zinc finger; that stretch reads VKMICSECREDPPNLVEEFSSGDTVCGSCGLVLG. Cysteine 20, cysteine 23, cysteine 41, and cysteine 44 together coordinate Zn(2+). Tandem repeats lie at residues 128-204 and 239-315.

The protein belongs to the TFIIB family. Associates with TFIID-IIA (DA complex) to form TFIID-IIA-IIB (DAB-complex) which is then recognized by polymerase II.

It is found in the nucleus. In terms of biological role, general factor that plays a major role in the activation of eukaryotic genes transcribed by RNA polymerase II. This Schizosaccharomyces pombe (strain 972 / ATCC 24843) (Fission yeast) protein is Transcription initiation factor IIB (sua7).